Here is a 169-residue protein sequence, read N- to C-terminus: Peptide methionine sulfoxide reductase MsrA (169 aa).

Cys-10 is a catalytic residue.

The protein belongs to the MsrA Met sulfoxide reductase family.

It catalyses the reaction L-methionyl-[protein] + [thioredoxin]-disulfide + H2O = L-methionyl-(S)-S-oxide-[protein] + [thioredoxin]-dithiol. The enzyme catalyses [thioredoxin]-disulfide + L-methionine + H2O = L-methionine (S)-S-oxide + [thioredoxin]-dithiol. Has an important function as a repair enzyme for proteins that have been inactivated by oxidation. Catalyzes the reversible oxidation-reduction of methionine sulfoxide in proteins to methionine. The sequence is that of Peptide methionine sulfoxide reductase MsrA from Streptococcus equi subsp. zooepidemicus (strain MGCS10565).